We begin with the raw amino-acid sequence, 342 residues long: Periplasmic protein TorT (342 aa).

The first 18 residues, 1 to 18 (MRVLLFLLLSLFMLPAFS), serve as a signal peptide directing secretion.

The protein belongs to the bacterial solute-binding protein 2 family.

It localises to the periplasm. Its function is as follows. Upon binding a putative inducer it probably interacts with TorS and allows it to play a role in the induction of the torCAD operon for trimethylamine N-oxide reductase. The sequence is that of Periplasmic protein TorT (torT) from Escherichia coli (strain K12).